A 125-amino-acid polypeptide reads, in one-letter code: Protein ELF4-LIKE 1 (125 aa).

The segment covering 1–18 (MEASRNRSLVGNNRSPEM) has biased composition (polar residues). Residues 1 to 28 (MEASRNRSLVGNNRSPEMNENDGEDVAA) are disordered.

The protein belongs to the EARLY FLOWERING 4 family. As to quaternary structure, homodimer.

The protein localises to the nucleus. Functionally, component of the central CCA1/LHY-TOC1 feedback loop in the circadian clock that promotes clock accuracy and is required for sustained rhythms in the absence of daily light/dark cycles. This is Protein ELF4-LIKE 1 (EFL1) from Arabidopsis thaliana (Mouse-ear cress).